The primary structure comprises 528 residues: ATP synthase F(1) complex catalytic subunit beta, mitochondrial (528 aa).

A mitochondrion-targeting transit peptide spans 1–46 (MLGLVGRVVAASASGALRGLSPSAPLPQAQLLLRAAPAALQPARDY). A glycan (O-linked (GlcNAc) serine) is linked at S106. An N6-acetyllysine; alternate mark is found at K124 and K161. An N6-succinyllysine; alternate mark is found at K124 and K161. K198 is modified (N6-acetyllysine). ADP contacts are provided by G209, V210, G211, K212, T213, and V214. G209 provides a ligand contact to ATP. Phosphate is bound by residues G209, V210, G211, K212, and T213. Positions 211, 212, 213, and 214 each coordinate ATP. Position 213 (T213) interacts with Mg(2+). Residue E238 participates in Mg(2+) binding. R239 contacts ATP. An N6-acetyllysine; alternate mark is found at K259 and K264. 2 positions are modified to N6-succinyllysine; alternate: K259 and K264. Residue T312 is modified to Phosphothreonine. A Phosphoserine modification is found at S415. K426 bears the N6-acetyllysine mark. S433 bears the Phosphoserine mark. N6-acetyllysine occurs at positions 480 and 485. At K522 the chain carries N6-acetyllysine; alternate. N6-succinyllysine; alternate is present on K522.

This sequence belongs to the ATPase alpha/beta chains family. As to quaternary structure, homotrimer. Component of the ATP synthase complex composed at least of ATP5F1A/subunit alpha, ATP5F1B/subunit beta, ATP5MC1/subunit c (homooctomer), MT-ATP6/subunit a, MT-ATP8/subunit 8, ATP5ME/subunit e, ATP5MF/subunit f, ATP5MG/subunit g, ATP5MK/subunit k, ATP5MJ/subunit j, ATP5F1C/subunit gamma, ATP5F1D/subunit delta, ATP5F1E/subunit epsilon, ATP5PF/subunit F6, ATP5PB/subunit b, ATP5PD/subunit d, ATP5PO/subunit OSCP. ATP synthase complex consists of a soluble F(1) head domain (subunits alpha(3) and beta(3)) - the catalytic core - and a membrane F(0) domain - the membrane proton channel (subunits c, a, 8, e, f, g, k and j). These two domains are linked by a central stalk (subunits gamma, delta, and epsilon) rotating inside the F1 region and a stationary peripheral stalk (subunits F6, b, d, and OSCP). Interacts with PPIF. Interacts with BCL2L1 isoform BCL-X(L); the interaction mediates the association of BCL2L1 isoform BCL-X(L) with the mitochondrial membrane F(1)F(0) ATP synthase and enhances neurons metabolic efficiency. Interacts with CLN5 and PPT1. Interacts with S100A1; this interaction increases F1-ATPase activity. Interacts with MTLN. Interacts with TTC5/STRAP; the interaction results in decreased mitochondrial ATP production.

The protein localises to the mitochondrion inner membrane. The enzyme catalyses ATP + H2O + 4 H(+)(in) = ADP + phosphate + 5 H(+)(out). Functionally, catalytic subunit beta, of the mitochondrial membrane ATP synthase complex (F(1)F(0) ATP synthase or Complex V) that produces ATP from ADP in the presence of a proton gradient across the membrane which is generated by electron transport complexes of the respiratory chain. ATP synthase complex consist of a soluble F(1) head domain - the catalytic core - and a membrane F(1) domain - the membrane proton channel. These two domains are linked by a central stalk rotating inside the F(1) region and a stationary peripheral stalk. During catalysis, ATP synthesis in the catalytic domain of F(1) is coupled via a rotary mechanism of the central stalk subunits to proton translocation. In vivo, can only synthesize ATP although its ATP hydrolase activity can be activated artificially in vitro. With the subunit alpha (ATP5F1A), forms the catalytic core in the F(1) domain. This chain is ATP synthase F(1) complex catalytic subunit beta, mitochondrial, found in Bos taurus (Bovine).